The chain runs to 553 residues: Phenylalanine--tRNA ligase alpha subunit (553 aa).

L-phenylalanine-binding residues include Thr-400 and Phe-479. Glu-481 contacts Mg(2+).

It belongs to the class-II aminoacyl-tRNA synthetase family. Phe-tRNA synthetase alpha subunit type 2 subfamily. Tetramer of two alpha and two beta subunits. It depends on Mg(2+) as a cofactor.

The protein resides in the cytoplasm. The enzyme catalyses tRNA(Phe) + L-phenylalanine + ATP = L-phenylalanyl-tRNA(Phe) + AMP + diphosphate + H(+). In Treponema pallidum (strain Nichols), this protein is Phenylalanine--tRNA ligase alpha subunit.